We begin with the raw amino-acid sequence, 449 residues long: Sensor protein QseC (449 aa).

The Cytoplasmic segment spans residues 1 to 12 (MKFTQRLSLRVR). The helical transmembrane segment at 13-33 (LTLIFLILASVTWLLSSFVAW) threads the bilayer. The Periplasmic segment spans residues 34-156 (KQTTDNVDEL…QEWEYREDMA (123 aa)). A helical transmembrane segment spans residues 157-177 (LAIVAGQLIPWLVALPIMLII). At 178–449 (MMVLLGRELA…QGGFEAKVSW (272 aa)) the chain is on the cytoplasmic side. Positions 243 to 449 (DAAHELRSPL…QGGFEAKVSW (207 aa)) constitute a Histidine kinase domain. Residue His-246 is modified to Phosphohistidine; by autocatalysis.

Its subcellular location is the cell inner membrane. The catalysed reaction is ATP + protein L-histidine = ADP + protein N-phospho-L-histidine.. Functionally, member of a two-component regulatory system QseB/QseC. Activates the flagella regulon by activating transcription of FlhDC. May activate QseB by phosphorylation. The protein is Sensor protein QseC (qseC) of Escherichia coli (strain K12).